A 674-amino-acid chain; its full sequence is U-box domain-containing protein 16 (674 aa).

The U-box domain maps to 273 to 347; it reads NIPADFRCPI…VLWCRDQKIP (75 aa). 3 ARM repeats span residues 399-438, 441-481, and 484-523; these read TVAR…NLSI, QNKT…SLAG, and AYRR…NLVA.

The catalysed reaction is S-ubiquitinyl-[E2 ubiquitin-conjugating enzyme]-L-cysteine + [acceptor protein]-L-lysine = [E2 ubiquitin-conjugating enzyme]-L-cysteine + N(6)-ubiquitinyl-[acceptor protein]-L-lysine.. It functions in the pathway protein modification; protein ubiquitination. Functions as an E3 ubiquitin ligase. The polypeptide is U-box domain-containing protein 16 (PUB16) (Arabidopsis thaliana (Mouse-ear cress)).